The chain runs to 152 residues: Transcriptional regulator MraZ (152 aa).

SpoVT-AbrB domains follow at residues 5–52 (ASAI…PLDE) and 81–124 (AHEC…DEAA).

This sequence belongs to the MraZ family. In terms of assembly, forms oligomers.

The protein localises to the cytoplasm. It localises to the nucleoid. The sequence is that of Transcriptional regulator MraZ from Shewanella violacea (strain JCM 10179 / CIP 106290 / LMG 19151 / DSS12).